A 444-amino-acid chain; its full sequence is tRNA-2-methylthio-N(6)-dimethylallyladenosine synthase (444 aa).

The 119-residue stretch at 6–124 folds into the MTTase N-terminal domain; the sequence is KTFKIITYGC…LPQLIEEIKA (119 aa). Residues Cys15, Cys51, Cys85, Cys161, Cys165, and Cys168 each contribute to the [4Fe-4S] cluster site. The Radical SAM core domain maps to 147–377; that stretch reads RARGAQAFVT…MELQNSISLA (231 aa). The TRAM domain occupies 380 to 443; it reads EALVGQEVEV…TWLLKGEMVD (64 aa).

It belongs to the methylthiotransferase family. MiaB subfamily. In terms of assembly, monomer. Requires [4Fe-4S] cluster as cofactor.

It is found in the cytoplasm. The enzyme catalyses N(6)-dimethylallyladenosine(37) in tRNA + (sulfur carrier)-SH + AH2 + 2 S-adenosyl-L-methionine = 2-methylsulfanyl-N(6)-dimethylallyladenosine(37) in tRNA + (sulfur carrier)-H + 5'-deoxyadenosine + L-methionine + A + S-adenosyl-L-homocysteine + 2 H(+). Its function is as follows. Catalyzes the methylthiolation of N6-(dimethylallyl)adenosine (i(6)A), leading to the formation of 2-methylthio-N6-(dimethylallyl)adenosine (ms(2)i(6)A) at position 37 in tRNAs that read codons beginning with uridine. The polypeptide is tRNA-2-methylthio-N(6)-dimethylallyladenosine synthase (Moorella thermoacetica (strain ATCC 39073 / JCM 9320)).